Here is a 255-residue protein sequence, read N- to C-terminus: tRNA (guanine-N(1)-)-methyltransferase (255 aa).

S-adenosyl-L-methionine contacts are provided by residues Gly113 and Ile133–Leu138.

The protein belongs to the RNA methyltransferase TrmD family. Homodimer.

The protein resides in the cytoplasm. It catalyses the reaction guanosine(37) in tRNA + S-adenosyl-L-methionine = N(1)-methylguanosine(37) in tRNA + S-adenosyl-L-homocysteine + H(+). Specifically methylates guanosine-37 in various tRNAs. This is tRNA (guanine-N(1)-)-methyltransferase from Salmonella paratyphi A (strain ATCC 9150 / SARB42).